The sequence spans 188 residues: Peptidyl-tRNA hydrolase (188 aa).

Y14 contacts tRNA. H19 functions as the Proton acceptor in the catalytic mechanism. TRNA is bound by residues Y64, N66, and N112.

It belongs to the PTH family. In terms of assembly, monomer.

It is found in the cytoplasm. It carries out the reaction an N-acyl-L-alpha-aminoacyl-tRNA + H2O = an N-acyl-L-amino acid + a tRNA + H(+). Functionally, hydrolyzes ribosome-free peptidyl-tRNAs (with 1 or more amino acids incorporated), which drop off the ribosome during protein synthesis, or as a result of ribosome stalling. Catalyzes the release of premature peptidyl moieties from peptidyl-tRNA molecules trapped in stalled 50S ribosomal subunits, and thus maintains levels of free tRNAs and 50S ribosomes. This chain is Peptidyl-tRNA hydrolase, found in Bacillus pumilus (strain SAFR-032).